Consider the following 204-residue polypeptide: uncharacterized protein (204 aa).

6 helical membrane passes run 19–39 (TANPAPLGLLGFGITTILLNL), 42–62 (AGLFPINSMILAMGFAYGGIA), 78–98 (GTVAFGSYGLFWWSLVLLLVI), 116–136 (PVAMASYLFMWGLFTLLMFIA), 143–163 (GIQVIFISLAVLFFLLTAGEI), and 167–187 (ALITAVAGYEGIFTGAAAMYV).

It belongs to the acetate uptake transporter (AceTr) (TC 2.A.96) family.

The protein localises to the cell membrane. This is an uncharacterized protein from Methanothermobacter thermautotrophicus (strain ATCC 29096 / DSM 1053 / JCM 10044 / NBRC 100330 / Delta H) (Methanobacterium thermoautotrophicum).